We begin with the raw amino-acid sequence, 453 residues long: Ubiquitin-associated protein 1 (453 aa).

The region spanning 19-65 is the UMA domain; that stretch reads LDDVPFKLNEKFRCPSKVGLPIGFCLSDCNAILSDLQYDFNLERRTV. Basic and acidic residues predominate over residues 83–93; that stretch reads EAIRTDSESER. 3 disordered regions span residues 83-119, 189-223, and 260-335; these read EAIR…QDIV, LQSQ…AKTG, and FPKL…AGTT. Residues 189 to 199 show a composition bias toward low complexity; that stretch reads LQSQPQSSVSP. Positions 285 to 328 are enriched in polar residues; that stretch reads NLSNGTPPSLQRTASNNNTTLPQEQPVFAQNGTPKQSNPVTVTS. UBA domains lie at 340-381 and 403-449; these read SPSE…LFTH and GSEE…LMTR.

Component of an ESCRT-I complex (endosomal sorting complex required for transport I).

The protein localises to the cytoplasm. Its subcellular location is the cytosol. It localises to the endosome. Its function is as follows. Component of the ESCRT-I complex, a regulator of vesicular trafficking process. Binds to ubiquitinated cargo proteins and is required for the sorting of endocytic ubiquitinated cargos into multivesicular bodies (MVBs). The polypeptide is Ubiquitin-associated protein 1 (Danio rerio (Zebrafish)).